The following is an 82-amino-acid chain: Penaeidin-3f (82 aa).

Positions 1-19 (MRLVACLVFLASFALVCQG) are cleaved as a signal peptide. At Gln20 the chain carries Pyrrolidone carboxylic acid. 3 disulfides stabilise this stretch: Cys51-Cys66, Cys55-Cys73, and Cys67-Cys74. Ser81 is subject to Serine amide.

It belongs to the penaeidin family.

It localises to the cytoplasmic granule. Functionally, antibacterial and antifungal activity. Presents chitin-binding activity. This is Penaeidin-3f from Penaeus vannamei (Whiteleg shrimp).